The following is a 371-amino-acid chain: Cytochrome b (371 aa).

A run of 4 helical transmembrane segments spans residues 25–45 (FGSMLLTCSMIQVLTGFFLAV), 69–90 (WMVQNLHAIGASMFFICIYIHI), 105–125 (WLSGTTLLIMLMATAFFGYVL), and 170–190 (FFALHFILPFGIISLSSLHVL). H75 and H89 together coordinate heme b. Residues H174 and H188 each contribute to the heme b site. H193 lines the a ubiquinone pocket. Transmembrane regions (helical) follow at residues 218-238 (MKDLLMLTTTLTLLLMTISFF), 280-300 (LGGALALAMSIMILFTVPFIH), 312-332 (LMQLMFWTFTSTFVLITWAAT), and 339-358 (FISISQVASIIYFTFFISNP).

It belongs to the cytochrome b family. The cytochrome bc1 complex contains 3 respiratory subunits (MT-CYB, CYC1 and UQCRFS1), 2 core proteins (UQCRC1 and UQCRC2) and probably 6 low-molecular weight proteins. It depends on heme b as a cofactor.

It localises to the mitochondrion inner membrane. In terms of biological role, component of the ubiquinol-cytochrome c reductase complex (complex III or cytochrome b-c1 complex) that is part of the mitochondrial respiratory chain. The b-c1 complex mediates electron transfer from ubiquinol to cytochrome c. Contributes to the generation of a proton gradient across the mitochondrial membrane that is then used for ATP synthesis. This chain is Cytochrome b (MT-CYB), found in Boa constrictor (Boa).